The primary structure comprises 86 residues: Cyclin-dependent kinase inhibitor 6 (86 aa).

A compositionally biased stretch (low complexity) spans 1-15; that stretch reads MAAAAATVTAVQPAA. Residues 1-23 form a disordered region; that stretch reads MAAAAATVTAVQPAASSCGKRDG.

It belongs to the CDI family. ICK/KRP subfamily.

The chain is Cyclin-dependent kinase inhibitor 6 (KRP6) from Oryza sativa subsp. japonica (Rice).